The following is a 294-amino-acid chain: 4-hydroxy-tetrahydrodipicolinate synthase (294 aa).

Pyruvate is bound at residue T45. The Proton donor/acceptor role is filled by Y133. Residue K162 is the Schiff-base intermediate with substrate of the active site. Pyruvate is bound at residue I204.

This sequence belongs to the DapA family. As to quaternary structure, homotetramer; dimer of dimers.

It is found in the cytoplasm. It carries out the reaction L-aspartate 4-semialdehyde + pyruvate = (2S,4S)-4-hydroxy-2,3,4,5-tetrahydrodipicolinate + H2O + H(+). It functions in the pathway amino-acid biosynthesis; L-lysine biosynthesis via DAP pathway; (S)-tetrahydrodipicolinate from L-aspartate: step 3/4. Catalyzes the condensation of (S)-aspartate-beta-semialdehyde [(S)-ASA] and pyruvate to 4-hydroxy-tetrahydrodipicolinate (HTPA). In Bartonella tribocorum (strain CIP 105476 / IBS 506), this protein is 4-hydroxy-tetrahydrodipicolinate synthase.